The following is a 530-amino-acid chain: Regulatory protein LuxO (530 aa).

Positions 194-423 constitute a Sigma-54 factor interaction domain; it reads IIGNSGPMLA…LEHVINRAAL (230 aa). ATP is bound by residues 222-229 and 285-294; these read GETGVGKE and ADGGTLFLDE.

In terms of biological role, involved in the regulation of different processes depending on the cell density. Acts together with sigma-54 to repress, perhaps indirectly, some genes. The chain is Regulatory protein LuxO (luxO) from Vibrio cholerae serotype O1 (strain ATCC 39541 / Classical Ogawa 395 / O395).